Reading from the N-terminus, the 440-residue chain is Cytochrome b (440 aa).

A helical transmembrane segment spans residues 46 to 66 (IWGIVLAFCLVLQIATGIVLV). Positions 97 and 111 each coordinate heme b. 9 helical membrane passes run 100–120 (GASL…YYGS), 129–149 (WIVG…GYVL), 156–176 (FWGA…GEAI), 194–214 (FFSL…VHIW), 253–273 (LFAL…MPNY), 296–315 (WYFL…VWVV), 330–350 (FFGV…PWLD), 365–385 (WWFW…AMPA), and 394–414 (LAGS…LGII). Heme b-binding residues include His198 and His212.

This sequence belongs to the cytochrome b family. As to quaternary structure, the main subunits of complex b-c1 are: cytochrome b, cytochrome c1 and the Rieske protein. Heme b is required as a cofactor.

The protein localises to the cell membrane. Functionally, component of the ubiquinol-cytochrome c reductase complex (complex III or cytochrome b-c1 complex), which is a respiratory chain that generates an electrochemical potential coupled to ATP synthesis. The sequence is that of Cytochrome b (petB) from Paracoccus denitrificans.